The following is a 496-amino-acid chain: L-arabinose isomerase (496 aa).

4 residues coordinate Mn(2+): Glu302, Glu329, His346, and His445.

It belongs to the arabinose isomerase family. It depends on Mn(2+) as a cofactor.

The enzyme catalyses beta-L-arabinopyranose = L-ribulose. It participates in carbohydrate degradation; L-arabinose degradation via L-ribulose; D-xylulose 5-phosphate from L-arabinose (bacterial route): step 1/3. Catalyzes the conversion of L-arabinose to L-ribulose. This chain is L-arabinose isomerase, found in Thermotoga maritima (strain ATCC 43589 / DSM 3109 / JCM 10099 / NBRC 100826 / MSB8).